A 629-amino-acid chain; its full sequence is Solute carrier family 22 member 14 (629 aa).

Residues 1–21 (MKEDQNYKTAFGSQNSRDTHR) are disordered. Residues 1–67 (MKEDQNYKTA…IGEFGTFQWR (67 aa)) lie on the Cytoplasmic side of the membrane. The span at 7-16 (YKTAFGSQNS) shows a compositional bias: polar residues. The chain crosses the membrane as a helical span at residues 68–88 (LVVLTFIPSILSTFFIFSHHF). The Extracellular portion of the chain corresponds to 89–183 (LLTAQRPYCN…LVCGNEPNKE (95 aa)). 4 N-linked (GlcNAc...) asparagine glycosylation sites follow: N98, N116, N124, and N149. Residues 184 to 204 (NGLTVFLSGVLTGSLLFGFLS) form a helical membrane-spanning segment. The Cytoplasmic segment spans residues 205-209 (DKLGR). The helical transmembrane segment at 210-230 (YPIILLSLLGFLIFGFGTAFV) threads the bilayer. Topologically, residues 231–240 (SSFYQYLFFR) are extracellular. The helical transmembrane segment at 241-261 (FFVAQASVGYAICSVSLVMEW) threads the bilayer. Over 262–269 (LVGEHRAQ) the chain is Cytoplasmic. The helical transmembrane segment at 270–290 (AVILQHSFLTIGVILLTGLAY) threads the bilayer. Residues 291–295 (KVVHW) lie on the Extracellular side of the membrane. A helical transmembrane segment spans residues 296-316 (RLLCLLGGMPMFPLICNIWVL). The Cytoplasmic portion of the chain corresponds to 317–378 (RESPRWLMVR…DFCTNQHLFK (62 aa)). The chain crosses the membrane as a helical span at residues 379–399 (VVLAIGCVWFTVSYISFTLNL). Topologically, residues 400-409 (KMNDFGLDVY) are extracellular. The chain crosses the membrane as a helical span at residues 410-430 (FVQMVRSIVAVPARLCCIILL). The Cytoplasmic segment spans residues 431 to 436 (EYFGRK). A helical transmembrane segment spans residues 437 to 457 (WALNLTLFLVTSMCLFLLFLP). Residues 458–463 (QEPKST) are Extracellular-facing. Residues 464–484 (IILTLMLAEFSMAGTLSIFFI) traverse the membrane as a helical segment. Topologically, residues 485-496 (YTAELLPTVLRS) are cytoplasmic. The chain crosses the membrane as a helical span at residues 497 to 517 (TGLGMVSLAWVAGAISSVAIF). Residues 518-523 (KQTKTQ) are Extracellular-facing. The helical transmembrane segment at 524–544 (LPIFFCCLCCVLALCFSSLVP) threads the bilayer. Over 545–629 (ETGSQSLRDS…PVQSLKAQPP (85 aa)) the chain is Cytoplasmic.

The protein belongs to the major facilitator (TC 2.A.1) superfamily. Organic cation transporter (TC 2.A.1.19) family. As to expression, testis-specific (at protein level). Specifically expressed in male germ cells (at protein level).

It localises to the mitochondrion inner membrane. The protein localises to the cell projection. It is found in the cilium. Its subcellular location is the flagellum membrane. The enzyme catalyses riboflavin(in) = riboflavin(out). In terms of biological role, riboflavin transporter localized at the inner mitochondrial membrane of the spermatozoa midpiece, which is required for male fertility. SLC22A14-mediated riboflavin transport is essential for spermatozoa energy generation and motility: riboflavin is the precursor of FMN and FAD, which are coenzymes of many enzymes in the TCA cycle (the citric acid cycle) in mitochondria. Required for sperm motility and normal sperm flagellar structure. The chain is Solute carrier family 22 member 14 from Mus musculus (Mouse).